The chain runs to 361 residues: Cysteine-rich with EGF-like domain protein 2-A (361 aa).

Residues 1-24 (MNGSRALHLSAWLLLCLLCSAAVA) form the signal peptide. The 43-residue stretch at 134–176 (DCLACLGGSERPCHGNGFCNGDGTRSGDGLCRCEAEYTGPFCL) folds into the EGF-like 1 domain. Disulfide bonds link cysteine 138-cysteine 152, cysteine 146-cysteine 164, and cysteine 166-cysteine 175. An N-linked (GlcNAc...) asparagine glycan is attached at asparagine 188. FU repeat units lie at residues 191–238 (YSLC…EESP) and 251–298 (SFLC…SEQV). The 42-residue stretch at 288 to 329 (DVDECDASEQVCSRENETCLNTAGSYKCTCSEGFEDKEGNCV) folds into the EGF-like 2; calcium-binding domain. 3 cysteine pairs are disulfide-bonded: cysteine 292–cysteine 306, cysteine 299–cysteine 315, and cysteine 317–cysteine 328. Asparagine 303 is a glycosylation site (N-linked (GlcNAc...) asparagine). Positions 341–361 (DGEMGTSASDINISNTAHEDL) are disordered. A compositionally biased stretch (polar residues) spans 346-361 (TSASDINISNTAHEDL). N-linked (GlcNAc...) asparagine glycosylation is present at asparagine 352.

Belongs to the CRELD family.

It is found in the secreted. Its subcellular location is the endoplasmic reticulum. In terms of biological role, possible role in neuronal acetylcholine receptor transport. The sequence is that of Cysteine-rich with EGF-like domain protein 2-A (creld2-a) from Xenopus laevis (African clawed frog).